The chain runs to 193 residues: Interleukin-18-binding protein (193 aa).

An N-terminal signal peptide occupies residues 1 to 28; it reads MTMRHCWTAGPSSWWVLLLYVHVILARA. One can recognise an Ig-like C2-type domain in the interval 60–161; it reads PALDVIWPEK…QVAQYHIILA (102 aa). N74, N98, N120, and N142 each carry an N-linked (GlcNAc...) asparagine glycan. The cysteines at positions 81 and 145 are disulfide-linked. A compositionally biased stretch (polar residues) spans 172 to 185; sequence SPSQETLSSHSPVS. A disordered region spans residues 172 to 193; the sequence is SPSQETLSSHSPVSRSAGPGVA.

It localises to the secreted. Functionally, binds to IL-18 and inhibits its activity. Functions as an inhibitor of the early TH1 cytokine response. This Mus musculus (Mouse) protein is Interleukin-18-binding protein (Il18bp).